A 205-amino-acid polypeptide reads, in one-letter code: Urease accessory protein UreG (205 aa).

Position 14-21 (14-21 (GPVGSGKT)) interacts with GTP.

Belongs to the SIMIBI class G3E GTPase family. UreG subfamily. Homodimer. UreD, UreF and UreG form a complex that acts as a GTP-hydrolysis-dependent molecular chaperone, activating the urease apoprotein by helping to assemble the nickel containing metallocenter of UreC. The UreE protein probably delivers the nickel.

It localises to the cytoplasm. Functionally, facilitates the functional incorporation of the urease nickel metallocenter. This process requires GTP hydrolysis, probably effectuated by UreG. This Proteus mirabilis (strain HI4320) protein is Urease accessory protein UreG.